Reading from the N-terminus, the 445-residue chain is Probable carboxypeptidase UREG_07869 (445 aa).

The first 17 residues, 1-17, serve as a signal peptide directing secretion; it reads MKSLILTTLALLPLVSC. Residue aspartate 165 coordinates Zn(2+). Glutamate 197 (proton acceptor) is an active-site residue. Glutamate 198 provides a ligand contact to Zn(2+).

This sequence belongs to the peptidase M20A family. Requires Zn(2+) as cofactor.

It is found in the secreted. This chain is Probable carboxypeptidase UREG_07869, found in Uncinocarpus reesii (strain UAMH 1704).